Consider the following 51-residue polypeptide: Large ribosomal subunit protein eL39 (51 aa).

This sequence belongs to the eukaryotic ribosomal protein eL39 family.

In Methanosarcina acetivorans (strain ATCC 35395 / DSM 2834 / JCM 12185 / C2A), this protein is Large ribosomal subunit protein eL39.